Reading from the N-terminus, the 133-residue chain is Ribonuclease VapC17 (133 aa).

Mg(2+) contacts are provided by aspartate 7 and aspartate 93. Positions 30–118 constitute a PINc domain; that stretch reads AICDIGELEW…HHDRDYKRIA (89 aa).

This sequence belongs to the PINc/VapC protein family. Mg(2+) is required as a cofactor.

Toxic component of a type II toxin-antitoxin (TA) system. An RNase. The cognate antitoxin is VapB17. The protein is Ribonuclease VapC17 of Mycobacterium tuberculosis (strain CDC 1551 / Oshkosh).